Here is a 350-residue protein sequence, read N- to C-terminus: uncharacterized protein (350 aa).

Residues D214, D225, H289, E318, and E332 each coordinate Mn(2+).

It belongs to the peptidase M24B family. Mn(2+) serves as cofactor.

This is an uncharacterized protein from Staphylococcus saprophyticus subsp. saprophyticus (strain ATCC 15305 / DSM 20229 / NCIMB 8711 / NCTC 7292 / S-41).